Reading from the N-terminus, the 123-residue chain is Large ribosomal subunit protein bL12 (123 aa).

Belongs to the bacterial ribosomal protein bL12 family. As to quaternary structure, homodimer. Part of the ribosomal stalk of the 50S ribosomal subunit. Forms a multimeric L10(L12)X complex, where L10 forms an elongated spine to which 2 to 4 L12 dimers bind in a sequential fashion. Binds GTP-bound translation factors.

Functionally, forms part of the ribosomal stalk which helps the ribosome interact with GTP-bound translation factors. Is thus essential for accurate translation. This Mycoplasmopsis synoviae (strain 53) (Mycoplasma synoviae) protein is Large ribosomal subunit protein bL12.